A 1602-amino-acid polypeptide reads, in one-letter code: Mediator of RNA polymerase II transcription subunit 26 (1602 aa).

The TFIIS N-terminal domain occupies 8 to 85 (QLTSHLSQAL…KMWREMVGIQ (78 aa)). Disordered regions lie at residues 86 to 108 (QTAN…PSAH), 238 to 298 (VTDS…AQNE), 399 to 481 (EDSI…KGVD), 580 to 617 (FSNK…SLDS), and 694 to 736 (SDNG…MDTP). The span at 273-285 (RPKKFKKDKKHKE) shows a compositional bias: basic residues. Polar residues predominate over residues 401 to 414 (SITNDSSTSCSRLS). Positions 418 to 431 (VEERRKSDKIDDSI) are enriched in basic and acidic residues. Residues 467–477 (VPKKRGRKKGS) show a composition bias toward basic residues. Residues 587 to 604 (AGNTDSDTITSEPSQDSN) are compositionally biased toward polar residues. Residues 715-728 (KQEEQLPKLERLSD) show a composition bias toward basic and acidic residues. Residues 792–820 (LDVASVNADTVQNQINSHNQEGETSEEQN) are a coiled coil. 2 disordered regions span residues 1035–1158 (FEET…EVEN) and 1372–1407 (NTSA…NESD). The segment covering 1056–1070 (SSSSNSSCSNSSNSS) has biased composition (low complexity). A compositionally biased stretch (basic and acidic residues) spans 1073–1083 (KTQDSINEKLR). Residues 1101–1112 (RKRRGKNRKKRN) are compositionally biased toward basic residues. Residues 1124-1143 (ISLNGTISNLSSSNNSSSSE) show a composition bias toward low complexity. The segment covering 1144 to 1158 (SETETGLENENEVEN) has biased composition (acidic residues). The span at 1378-1388 (TVSEDPLKIEE) shows a compositional bias: basic and acidic residues.

It belongs to the Mediator complex subunit 26 family. As to quaternary structure, component of the Mediator complex.

It localises to the nucleus. Component of the Mediator complex, a coactivator involved in the regulated transcription of nearly all RNA polymerase II-dependent genes. Mediator functions as a bridge to convey information from gene-specific regulatory proteins to the basal RNA polymerase II transcription machinery. Mediator is recruited to promoters by direct interactions with regulatory proteins and serves as a scaffold for the assembly of a functional preinitiation complex with RNA polymerase II and the general transcription factors. The sequence is that of Mediator of RNA polymerase II transcription subunit 26 (MED26) from Drosophila pseudoobscura pseudoobscura (Fruit fly).